The chain runs to 302 residues: Sulfate adenylyltransferase subunit 2 (302 aa).

The protein belongs to the PAPS reductase family. CysD subfamily. Heterodimer composed of CysD, the smaller subunit, and CysN.

The enzyme catalyses sulfate + ATP + H(+) = adenosine 5'-phosphosulfate + diphosphate. It participates in sulfur metabolism; hydrogen sulfide biosynthesis; sulfite from sulfate: step 1/3. In terms of biological role, with CysN forms the ATP sulfurylase (ATPS) that catalyzes the adenylation of sulfate producing adenosine 5'-phosphosulfate (APS) and diphosphate, the first enzymatic step in sulfur assimilation pathway. APS synthesis involves the formation of a high-energy phosphoric-sulfuric acid anhydride bond driven by GTP hydrolysis by CysN coupled to ATP hydrolysis by CysD. This chain is Sulfate adenylyltransferase subunit 2, found in Xanthomonas campestris pv. campestris (strain 8004).